A 471-amino-acid chain; its full sequence is Trehalose-binding lipoprotein LpqY (471 aa).

Residues 1–28 (MDGRQVVRARRWCATAAVALMTASTVAA) form the signal peptide. Cys-29 carries the N-palmitoyl cysteine lipid modification. The S-diacylglycerol cysteine moiety is linked to residue Cys-29. Positions 45, 46, 79, 100, 154, 198, 279, 281, 354, and 424 each coordinate alpha,alpha-trehalose. Cys-57 and Cys-375 form a disulfide bridge.

This sequence belongs to the bacterial solute-binding protein 1 family. In terms of assembly, monomer. The complex is composed of two ATP-binding proteins (SugC), two transmembrane proteins (SugA and SugB) and a solute-binding protein (LpqY).

The protein localises to the cell inner membrane. In terms of biological role, part of the ABC transporter complex LpqY-SugA-SugB-SugC, which is highly specific for uptake of trehalose. Involved in the recycling of extracellular trehalose released from trehalose-containing molecules synthesized by M.thermoresistibile. Trehalose uptake is essential for virulence. Binds deuterated trehalose with similar high affinity to trehalose, trehalose analogs including galactotrehalose, 4-azido-4-deoxy-trehalose, 6-azido-6-deoxy-trehalose, 3-azido-3-deoxy-trehalose and mannotrehalose in the order of decreasing affinity, respectively, and 2-azido-2-deoxy-trehalose and kojibiose (alpha1,2-glycosidic bond) with very low affinity. Does not recognize single glucose, 6-amino-6-deoxy-trehalose, trehalose-6-phosphate, nigerose (alpha1,3-glycosidic bond), maltose (alpha1,4-glycosidic bond), isomaltose (alpha1,6-glycosidic bond) or glycerophosphocholine. Decreased recognition of alpha,beta-trehalose and almost no recognition of beta,beta-trehalose. Substrate specificity indicates a strict requirement for an alpha1,1-linked disaccharide. In Mycolicibacterium thermoresistibile (strain ATCC 19527 / DSM 44167 / CIP 105390 / JCM 6362 / NCTC 10409 / 316) (Mycobacterium thermoresistibile), this protein is Trehalose-binding lipoprotein LpqY.